Reading from the N-terminus, the 214-residue chain is Adenylate kinase (214 aa).

An ATP-binding site is contributed by 10 to 15 (GAGKGT). The interval 30–59 (STGDMFRDHKARGTEIGKQVQAIMDAGGLV) is NMP. AMP is bound by residues T31, R36, 57–59 (GLV), 85–88 (GYPR), and Q92. Residues 126–163 (GRRSCPRCGAVYHVSQNPPHRAGFCDRDDTALVQREDD) are LID. Position 127 (R127) interacts with ATP. Residues C130 and C133 each contribute to the Zn(2+) site. 136 to 137 (VY) is an ATP binding site. 2 residues coordinate Zn(2+): C150 and D153. Residues R160 and R171 each coordinate AMP. G199 is an ATP binding site.

Belongs to the adenylate kinase family. As to quaternary structure, monomer.

The protein resides in the cytoplasm. It carries out the reaction AMP + ATP = 2 ADP. The protein operates within purine metabolism; AMP biosynthesis via salvage pathway; AMP from ADP: step 1/1. Its function is as follows. Catalyzes the reversible transfer of the terminal phosphate group between ATP and AMP. Plays an important role in cellular energy homeostasis and in adenine nucleotide metabolism. The protein is Adenylate kinase of Anaeromyxobacter sp. (strain K).